The primary structure comprises 120 residues: Small ribosomal subunit protein uS13 (120 aa).

Residues proline 96 to lysine 120 are disordered.

The protein belongs to the universal ribosomal protein uS13 family. Part of the 30S ribosomal subunit. Forms a loose heterodimer with protein S19. Forms two bridges to the 50S subunit in the 70S ribosome.

Located at the top of the head of the 30S subunit, it contacts several helices of the 16S rRNA. In the 70S ribosome it contacts the 23S rRNA (bridge B1a) and protein L5 of the 50S subunit (bridge B1b), connecting the 2 subunits; these bridges are implicated in subunit movement. Contacts the tRNAs in the A and P-sites. This is Small ribosomal subunit protein uS13 from Neisseria gonorrhoeae (strain ATCC 700825 / FA 1090).